Here is a 460-residue protein sequence, read N- to C-terminus: Cysteine--tRNA ligase (460 aa).

C28 contacts Zn(2+). The 'HIGH' region motif lies at 30–40 (MTVYDYCHLGH). Positions 209, 234, and 238 each coordinate Zn(2+). The 'KMSKS' region signature appears at 266-270 (KMSKS). Residue K269 participates in ATP binding.

This sequence belongs to the class-I aminoacyl-tRNA synthetase family. In terms of assembly, monomer. The cofactor is Zn(2+).

The protein localises to the cytoplasm. The catalysed reaction is tRNA(Cys) + L-cysteine + ATP = L-cysteinyl-tRNA(Cys) + AMP + diphosphate. The chain is Cysteine--tRNA ligase from Pseudomonas entomophila (strain L48).